The chain runs to 116 residues: Proline-rich protein 9 (116 aa).

The sequence is that of Proline-rich protein 9 (Prr9) from Mus musculus (Mouse).